The chain runs to 185 residues: Elongation factor P (185 aa).

This sequence belongs to the elongation factor P family.

It is found in the cytoplasm. It participates in protein biosynthesis; polypeptide chain elongation. Functionally, involved in peptide bond synthesis. Stimulates efficient translation and peptide-bond synthesis on native or reconstituted 70S ribosomes in vitro. Probably functions indirectly by altering the affinity of the ribosome for aminoacyl-tRNA, thus increasing their reactivity as acceptors for peptidyl transferase. The polypeptide is Elongation factor P (Thermoanaerobacter sp. (strain X514)).